Here is a 32-residue protein sequence, read N- to C-terminus: Hyaluronidase-Pk1a (32 aa).

A glycan (N-linked (GlcNAc...) asparagine) is linked at asparagine 23.

This sequence belongs to the glycosyl hydrolase 56 family. As to expression, expressed by the venom gland.

The protein resides in the secreted. It catalyses the reaction Random hydrolysis of (1-&gt;4)-linkages between N-acetyl-beta-D-glucosamine and D-glucuronate residues in hyaluronate.. Its function is as follows. Hydrolyzes high molecular weight hyaluronic acid to produce small oligosaccharides. This Phoneutria keyserlingi (Brazilian wandering spider) protein is Hyaluronidase-Pk1a.